Reading from the N-terminus, the 205-residue chain is Ribosomal RNA large subunit methyltransferase E (205 aa).

Gly60, Trp62, Asp80, Asp96, and Asp121 together coordinate S-adenosyl-L-methionine. Lys161 functions as the Proton acceptor in the catalytic mechanism.

Belongs to the class I-like SAM-binding methyltransferase superfamily. RNA methyltransferase RlmE family.

It localises to the cytoplasm. The catalysed reaction is uridine(2552) in 23S rRNA + S-adenosyl-L-methionine = 2'-O-methyluridine(2552) in 23S rRNA + S-adenosyl-L-homocysteine + H(+). Specifically methylates the uridine in position 2552 of 23S rRNA at the 2'-O position of the ribose in the fully assembled 50S ribosomal subunit. The protein is Ribosomal RNA large subunit methyltransferase E of Chromobacterium violaceum (strain ATCC 12472 / DSM 30191 / JCM 1249 / CCUG 213 / NBRC 12614 / NCIMB 9131 / NCTC 9757 / MK).